The primary structure comprises 1100 residues: Exportin-T (1100 aa).

This sequence belongs to the exportin family. As to quaternary structure, interacts with GSP1, GSP2, NSP1, NUP2 and UTP8.

The protein resides in the nucleus. It is found in the cytoplasm. Functionally, tRNA nucleus export receptor which facilitates tRNA translocation across the nuclear pore complex. Preferentially interacts with tRNAs with mature 5'- and 3'-termini and does not distinguish between intron-containing and spliced tRNAs. In the nucleus binds to tRNA and to the Ran-GTPases GSP1 or GSP2 in their active GTP-bound form. Docking of this trimeric complex to the nuclear pore complex (NPC) is mediated through binding to nucleoporins. Upon transit of a nuclear export complex into the cytoplasm, disassembling of the complex and hydrolysis of Ran-GTP to Ran-GDP cause release of the tRNA from the export receptor. The directionality of nuclear export is thought to be conferred by an asymmetric distribution of the GTP- and GDP-bound forms of Ran between the cytoplasm and nucleus. Involved in pre-tRNA splicing, probably by affecting the interaction of pre-tRNA with splicing endonuclease. The polypeptide is Exportin-T (LOS1) (Saccharomyces cerevisiae (strain YJM789) (Baker's yeast)).